Consider the following 250-residue polypeptide: 2,3-bisphosphoglycerate-dependent phosphoglycerate mutase (250 aa).

Residues 10-17 (RHGESQWN), 23-24 (TG), Arg62, 89-92 (ERHY), Lys100, 116-117 (RR), and 185-186 (GN) contribute to the substrate site. Residue His11 is the Tele-phosphohistidine intermediate of the active site. Glu89 serves as the catalytic Proton donor/acceptor.

The protein belongs to the phosphoglycerate mutase family. BPG-dependent PGAM subfamily. In terms of assembly, homodimer.

It catalyses the reaction (2R)-2-phosphoglycerate = (2R)-3-phosphoglycerate. Its pathway is carbohydrate degradation; glycolysis; pyruvate from D-glyceraldehyde 3-phosphate: step 3/5. Catalyzes the interconversion of 2-phosphoglycerate and 3-phosphoglycerate. The sequence is that of 2,3-bisphosphoglycerate-dependent phosphoglycerate mutase from Salmonella agona (strain SL483).